The sequence spans 327 residues: GMP reductase (327 aa).

C176 functions as the Thioimidate intermediate in the catalytic mechanism. I205–V228 lines the NADP(+) pocket.

This sequence belongs to the IMPDH/GMPR family. GuaC type 2 subfamily.

It catalyses the reaction IMP + NH4(+) + NADP(+) = GMP + NADPH + 2 H(+). Its function is as follows. Catalyzes the irreversible NADPH-dependent deamination of GMP to IMP. It functions in the conversion of nucleobase, nucleoside and nucleotide derivatives of G to A nucleotides, and in maintaining the intracellular balance of A and G nucleotides. This is GMP reductase from Streptococcus agalactiae serotype V (strain ATCC BAA-611 / 2603 V/R).